A 261-amino-acid polypeptide reads, in one-letter code: Ribonuclease PH (261 aa).

Residues R87 and 125–127 (GTR) each bind phosphate.

This sequence belongs to the RNase PH family. Homohexameric ring arranged as a trimer of dimers.

The enzyme catalyses tRNA(n+1) + phosphate = tRNA(n) + a ribonucleoside 5'-diphosphate. Functionally, phosphorolytic 3'-5' exoribonuclease that plays an important role in tRNA 3'-end maturation. Removes nucleotide residues following the 3'-CCA terminus of tRNAs; can also add nucleotides to the ends of RNA molecules by using nucleoside diphosphates as substrates, but this may not be physiologically important. Probably plays a role in initiation of 16S rRNA degradation (leading to ribosome degradation) during starvation. This Desulforudis audaxviator (strain MP104C) protein is Ribonuclease PH.